Reading from the N-terminus, the 1337-residue chain is Multidrug resistance protein fer6 (1337 aa).

The first 23 residues, 1–23, serve as a signal peptide directing secretion; the sequence is MTPEASANWFSLCWFAWIDPILT. A glycan (N-linked (GlcNAc...) asparagine) is linked at N71. The next 2 membrane-spanning stretches (helical) occupy residues 94–114 and 138–158; these read FWIG…SPLL and LGSG…CVFL. Residues 95–386 form the ABC transmembrane type-1 1 domain; sequence WIGGLLKLLA…LPIAWNAIVD (292 aa). N187 is a glycosylation site (N-linked (GlcNAc...) asparagine). 4 consecutive transmembrane segments (helical) span residues 220 to 242, 247 to 269, 331 to 351, and 359 to 379; these read FFHM…IWSL, LPGI…RLFA, ALAF…YALV, and ILFS…FLPI. The 251-residue stretch at 417-667 folds into the ABC transporter 1 domain; it reads IQLEDASFTW…KGRVAELLLT (251 aa). The disordered stretch occupies residues 432–460; it reads ADTAKPVNEKKGQDSPSNEKETPVDRAST. Residues 438 to 455 are compositionally biased toward basic and acidic residues; sequence VNEKKGQDSPSNEKETPV. An N-linked (GlcNAc...) asparagine glycan is attached at N465. Position 478–485 (478–485) interacts with ATP; it reads GGVGSGKS. The segment at 699-751 is disordered; it reads GSASNRNSEASESTTTTVNAESKDTSNAEGVTNKTEKKDLVAPPAQAKSKALM. Residues 700 to 718 are compositionally biased toward low complexity; it reads SASNRNSEASESTTTTVNA. N-linked (GlcNAc...) asparagine glycosylation occurs at N731. 6 helical membrane passes run 769–789, 817–837, 890–909, 915–933, 999–1019, and 1028–1048; these read YLNA…VLVF, GIYA…GVIF, AMRT…VLIA, FLIP…AAYY, LSVR…ILVV, and GETG…GWMI. The ABC transmembrane type-1 2 domain occupies 781–1056; that stretch reads LFLVAVLVFQ…MIRHAAELEN (276 aa). N1057 carries N-linked (GlcNAc...) asparagine glycosylation. Residues 1097-1325 enclose the ABC transporter 2 domain; the sequence is IRFEGVEAKY…EKGAFRALCD (229 aa). Residue 1131–1138 participates in ATP binding; that stretch reads GRTGAGKS. N1227 carries an N-linked (GlcNAc...) asparagine glycan.

This sequence belongs to the ABC transporter superfamily. ABCC family. Conjugate transporter (TC 3.A.1.208) subfamily.

It is found in the membrane. Multidrug resistance protein; part of the gene cluster that mediates the biosynthesis of siderophore ferrichrome A which is contributing to organismal virulence. The chain is Multidrug resistance protein fer6 from Mycosarcoma maydis (Corn smut fungus).